Here is a 104-residue protein sequence, read N- to C-terminus: Gastrin (104 aa).

A signal peptide spans 1–21 (MQRLCAYVLIHVLALAACSEA). The propeptide occupies 22 to 58 (SWKPGFQLQDASSGPGANRGKEPHELDRLGPASHHRR). The tract at residues 27–67 (FQLQDASSGPGANRGKEPHELDRLGPASHHRRQLGLQGPPH) is disordered. Over residues 40–49 (RGKEPHELDR) the composition is skewed to basic and acidic residues. The residue at position 59 (Gln59) is a Pyrrolidone carboxylic acid; in form big gastrin. At Gln76 the chain carries Pyrrolidone carboxylic acid; in form gastrin. Tyr87 carries the sulfotyrosine; partial modification. Phe92 carries the post-translational modification Phenylalanine amide. Ser96 bears the Phosphoserine mark. The propeptide occupies 96–104 (SAEEGDQRP).

This sequence belongs to the gastrin/cholecystokinin family. Post-translationally, sulfation enhances proteolytic processing, and blocks peptide degradation. Levels of sulfation differ between proteolytically-cleaved gastrins. Thus, gastrin-6 is almost 73% sulfated, whereas the larger gastrins are less than 50% sulfated. Sulfation levels are also tissue-specific.

It localises to the secreted. In terms of biological role, gastrin stimulates the stomach mucosa to produce and secrete hydrochloric acid and the pancreas to secrete its digestive enzymes. It also stimulates smooth muscle contraction and increases blood circulation and water secretion in the stomach and intestine. This is Gastrin (GAST) from Sus scrofa (Pig).